The sequence spans 277 residues: Acetyl-coenzyme A carboxylase carboxyl transferase subunit beta (277 aa).

Positions 22 to 277 (LWTKCPGCNR…TLKQLLYFLT (256 aa)) constitute a CoA carboxyltransferase N-terminal domain. Zn(2+) contacts are provided by Cys-26, Cys-29, Cys-45, and Cys-48. The C4-type zinc finger occupies 26–48 (CPGCNRFLYTKELELNQSVCHYC).

It belongs to the AccD/PCCB family. In terms of assembly, acetyl-CoA carboxylase is a heterohexamer composed of biotin carboxyl carrier protein (AccB), biotin carboxylase (AccC) and two subunits each of ACCase subunit alpha (AccA) and ACCase subunit beta (AccD). It depends on Zn(2+) as a cofactor.

It localises to the cytoplasm. The enzyme catalyses N(6)-carboxybiotinyl-L-lysyl-[protein] + acetyl-CoA = N(6)-biotinyl-L-lysyl-[protein] + malonyl-CoA. It participates in lipid metabolism; malonyl-CoA biosynthesis; malonyl-CoA from acetyl-CoA: step 1/1. Functionally, component of the acetyl coenzyme A carboxylase (ACC) complex. Biotin carboxylase (BC) catalyzes the carboxylation of biotin on its carrier protein (BCCP) and then the CO(2) group is transferred by the transcarboxylase to acetyl-CoA to form malonyl-CoA. In Methylacidiphilum infernorum (isolate V4) (Methylokorus infernorum (strain V4)), this protein is Acetyl-coenzyme A carboxylase carboxyl transferase subunit beta.